We begin with the raw amino-acid sequence, 535 residues long: tRNA-2-methylthio-N(6)-dimethylallyladenosine synthase (535 aa).

The region spanning 24 to 139 is the MTTase N-terminal domain; that stretch reads RTYEVRTFGC…LPRLLERARH (116 aa). [4Fe-4S] cluster is bound by residues Cys-33, Cys-68, Cys-102, Cys-176, Cys-180, and Cys-183. The Radical SAM core domain maps to 162–392; sequence RDSSFSGWVS…IALQERISLE (231 aa). The 71-residue stretch at 395–465 folds into the TRAM domain; the sequence is EKLIGRDVEL…PHYLIADAAG (71 aa). The interval 512 to 535 is disordered; it reads RTREPLTSPGVGTMPLYDPTDGQR.

Belongs to the methylthiotransferase family. MiaB subfamily. As to quaternary structure, monomer. [4Fe-4S] cluster is required as a cofactor.

The protein localises to the cytoplasm. The catalysed reaction is N(6)-dimethylallyladenosine(37) in tRNA + (sulfur carrier)-SH + AH2 + 2 S-adenosyl-L-methionine = 2-methylsulfanyl-N(6)-dimethylallyladenosine(37) in tRNA + (sulfur carrier)-H + 5'-deoxyadenosine + L-methionine + A + S-adenosyl-L-homocysteine + 2 H(+). In terms of biological role, catalyzes the methylthiolation of N6-(dimethylallyl)adenosine (i(6)A), leading to the formation of 2-methylthio-N6-(dimethylallyl)adenosine (ms(2)i(6)A) at position 37 in tRNAs that read codons beginning with uridine. In Leifsonia xyli subsp. xyli (strain CTCB07), this protein is tRNA-2-methylthio-N(6)-dimethylallyladenosine synthase.